Reading from the N-terminus, the 251-residue chain is NADPH-dependent oxidoreductase (251 aa).

Belongs to the flavin oxidoreductase frp family. The cofactor is FMN.

Functionally, reduces FMN, organic nitro compounds and disulfide DTNB. Involved in maintenance of the cellular redox state and the disulfide stress response. The chain is NADPH-dependent oxidoreductase (nfrA) from Staphylococcus saprophyticus subsp. saprophyticus (strain ATCC 15305 / DSM 20229 / NCIMB 8711 / NCTC 7292 / S-41).